The primary structure comprises 103 residues: Histone H4 (103 aa).

The segment covering 1 to 14 has biased composition (gly residues); sequence MTGRGKGGKGLGKG. A disordered region spans residues 1–20; the sequence is MTGRGKGGKGLGKGGAKRHR. Thr2 is modified (N-acetylthreonine). The residue at position 6 (Lys6) is an N6-acetyl-N6-methyllysine; alternate. 4 positions are modified to N6-acetyllysine: Lys6, Lys9, Lys13, and Lys17. Lys13 carries the post-translational modification N6-acetyl-N6-methyllysine; alternate. Lys21 is subject to N6,N6-dimethyllysine. Lys32 is modified (N6-methyllysine).

It belongs to the histone H4 family. As to quaternary structure, the nucleosome is a histone octamer containing two molecules each of H2A, H2B, H3 and H4 assembled in one H3-H4 heterotetramer and two H2A-H2B heterodimers. The octamer wraps approximately 147 bp of DNA.

The protein localises to the nucleus. The protein resides in the chromosome. In terms of biological role, core component of nucleosome. Nucleosomes wrap and compact DNA into chromatin, limiting DNA accessibility to the cellular machineries which require DNA as a template. Histones thereby play a central role in transcription regulation, DNA repair, DNA replication and chromosomal stability. DNA accessibility is regulated via a complex set of post-translational modifications of histones, also called histone code, and nucleosome remodeling. Functionally, a mixture of histones H2B and H4 has antimicrobial activity against the Gram-positive bacterium M.luteus. The protein is Histone H4 of Penaeus vannamei (Whiteleg shrimp).